The sequence spans 1158 residues: ATP-dependent helicase/deoxyribonuclease subunit B (1158 aa).

Residue 8–15 participates in ATP binding; the sequence is GRAGTGKS. Residues Cys791, Cys1112, Cys1115, and Cys1121 each coordinate [4Fe-4S] cluster.

This sequence belongs to the helicase family. AddB/RexB type 1 subfamily. In terms of assembly, heterodimer of AddA and AddB. The cofactor is Mg(2+). It depends on [4Fe-4S] cluster as a cofactor.

Its function is as follows. The heterodimer acts as both an ATP-dependent DNA helicase and an ATP-dependent, dual-direction single-stranded exonuclease. Recognizes the chi site generating a DNA molecule suitable for the initiation of homologous recombination. The AddB subunit has 5' -&gt; 3' nuclease activity but not helicase activity. The polypeptide is ATP-dependent helicase/deoxyribonuclease subunit B (Clostridium perfringens (strain SM101 / Type A)).